Reading from the N-terminus, the 188-residue chain is MATHSTNEFRGGLKVMVDGDPCSIIDNEFVKPGKGQAFNRVKFRNLKTGRVLERTFKSGETLPAADVVEVEMQYLYNDGEFWHFMTSENYEQHAASKEAVAEAKQWLKEEALCMVTMWNGVPLSVEPPNFVELKITETEPGVRGDTATGGTKRAKLETGAVVRVPLFLNEGEIIKVDTRRGEYVSRAK.

Residue Lys-34 is modified to N6-(3,6-diaminohexanoyl)-5-hydroxylysine.

Belongs to the elongation factor P family. May be beta-lysylated on the epsilon-amino group of Lys-34 by the combined action of EpmA and EpmB, and then hydroxylated on the C5 position of the same residue by EpmC (if this protein is present). Lysylation is critical for the stimulatory effect of EF-P on peptide-bond formation. The lysylation moiety may extend toward the peptidyltransferase center and stabilize the terminal 3-CCA end of the tRNA. Hydroxylation of the C5 position on Lys-34 may allow additional potential stabilizing hydrogen-bond interactions with the P-tRNA.

The protein resides in the cytoplasm. The protein operates within protein biosynthesis; polypeptide chain elongation. Its function is as follows. Involved in peptide bond synthesis. Alleviates ribosome stalling that occurs when 3 or more consecutive Pro residues or the sequence PPG is present in a protein, possibly by augmenting the peptidyl transferase activity of the ribosome. Modification of Lys-34 is required for alleviation. The protein is Elongation factor P of Coxiella burnetii (strain CbuG_Q212) (Coxiella burnetii (strain Q212)).